Consider the following 104-residue polypeptide: Large ribosomal subunit protein bL21 (104 aa).

This sequence belongs to the bacterial ribosomal protein bL21 family. Part of the 50S ribosomal subunit. Contacts protein L20.

In terms of biological role, this protein binds to 23S rRNA in the presence of protein L20. The polypeptide is Large ribosomal subunit protein bL21 (Kosmotoga olearia (strain ATCC BAA-1733 / DSM 21960 / TBF 19.5.1)).